The following is a 234-amino-acid chain: Serum amyloid P-component (234 aa).

The signal sequence occupies residues 1-22 (MDKLLSLLGVSILAGLLLEAFA). The 200-residue stretch at 27 to 226 (TGKVFVFPRQ…YAVIRPRCVA (200 aa)) folds into the Pentraxin (PTX) domain. An N-linked (GlcNAc...) asparagine glycan is attached at N54. A disulfide bond links C58 and C117. Positions 81, 158, 159, 160, and 170 each coordinate Ca(2+).

The protein belongs to the pentraxin family. As to quaternary structure, homopentamer. Pentraxin (or pentaxin) have a discoid arrangement of 5 non-covalently bound subunits. The cofactor is Ca(2+).

Its subcellular location is the secreted. This Mesocricetus auratus (Golden hamster) protein is Serum amyloid P-component (APCS).